We begin with the raw amino-acid sequence, 444 residues long: Trigger factor (444 aa).

One can recognise a PPIase FKBP-type domain in the interval 166–251 (GDQVVIDFKG…VKAVKAPKAA (86 aa)).

It belongs to the FKBP-type PPIase family. Tig subfamily.

The protein resides in the cytoplasm. The enzyme catalyses [protein]-peptidylproline (omega=180) = [protein]-peptidylproline (omega=0). In terms of biological role, involved in protein export. Acts as a chaperone by maintaining the newly synthesized protein in an open conformation. Functions as a peptidyl-prolyl cis-trans isomerase. The protein is Trigger factor of Cereibacter sphaeroides (strain KD131 / KCTC 12085) (Rhodobacter sphaeroides).